The chain runs to 648 residues: Threonine--tRNA ligase (648 aa).

Residues 1 to 61 (MIDIILPDGS…INTATVKAIT (61 aa)) enclose the TGS domain. The catalytic stretch occupies residues 243 to 549 (DHRKLGRELE…LIEHYSGRLP (307 aa)). Residues cysteine 349, histidine 400, and histidine 526 each contribute to the Zn(2+) site.

The protein belongs to the class-II aminoacyl-tRNA synthetase family. In terms of assembly, homodimer. It depends on Zn(2+) as a cofactor.

It is found in the cytoplasm. The enzyme catalyses tRNA(Thr) + L-threonine + ATP = L-threonyl-tRNA(Thr) + AMP + diphosphate + H(+). In terms of biological role, catalyzes the attachment of threonine to tRNA(Thr) in a two-step reaction: L-threonine is first activated by ATP to form Thr-AMP and then transferred to the acceptor end of tRNA(Thr). Also edits incorrectly charged L-seryl-tRNA(Thr). The sequence is that of Threonine--tRNA ligase from Orientia tsutsugamushi (strain Boryong) (Rickettsia tsutsugamushi).